The chain runs to 876 residues: DNA gyrase subunit A (876 aa).

The region spanning 34–532 is the Topo IIA-type catalytic domain; sequence LPDVRDGLKP…NSVDINIEDL (499 aa). Tyr-122 functions as the O-(5'-phospho-DNA)-tyrosine intermediate in the catalytic mechanism. A GyrA-box motif is present at residues 559–565; that stretch reads QRRGGKG. Positions 844–876 are disordered; sequence DEELDAIDGSAAEGDEDIAPEADTDDDIAEDEE. Residues 856-876 show a composition bias toward acidic residues; it reads EGDEDIAPEADTDDDIAEDEE.

This sequence belongs to the type II topoisomerase GyrA/ParC subunit family. In terms of assembly, heterotetramer, composed of two GyrA and two GyrB chains. In the heterotetramer, GyrA contains the active site tyrosine that forms a transient covalent intermediate with DNA, while GyrB binds cofactors and catalyzes ATP hydrolysis.

It is found in the cytoplasm. The enzyme catalyses ATP-dependent breakage, passage and rejoining of double-stranded DNA.. Its function is as follows. A type II topoisomerase that negatively supercoils closed circular double-stranded (ds) DNA in an ATP-dependent manner to modulate DNA topology and maintain chromosomes in an underwound state. Negative supercoiling favors strand separation, and DNA replication, transcription, recombination and repair, all of which involve strand separation. Also able to catalyze the interconversion of other topological isomers of dsDNA rings, including catenanes and knotted rings. Type II topoisomerases break and join 2 DNA strands simultaneously in an ATP-dependent manner. This Klebsiella oxytoca protein is DNA gyrase subunit A.